A 2621-amino-acid polypeptide reads, in one-letter code: Nonribosomal peptide synthetase dtpA (2621 aa).

Residues Cys-446 to Arg-844 are adenylation 1. Residues Gln-978–Ser-1054 form the Carrier 1 domain. Ser-1015 carries the O-(pantetheine 4'-phosphoryl)serine modification. The interval Glu-1095–Gln-1506 is condensation 1. Residues Ser-1534–Arg-1930 form an adenylation 2 region. The Carrier 2 domain maps to Gln-2071–Ile-2147. Ser-2108 carries the post-translational modification O-(pantetheine 4'-phosphoryl)serine. A condensation 2 region spans residues Ala-2220–Asp-2618.

This sequence belongs to the NRP synthetase family.

Its pathway is alkaloid biosynthesis. Functionally, nonribosomal peptide synthetase; part of the gene cluster that mediates the biosynthesis of the dimeric diketopiperazine alkaloid ditryptophenaline. The nonribosomal peptide synthase dtpA accepts L-tryptophan and L-phenylalanine as its substrates and forms the phenylalanyl-tryptophanyl cyclic dipeptide product cyclophenylalanyltryptophenyl. The N-methyltransferase dtpB is responsible for the N-methylation of cyclophenylalanyltryptophenyl to yield cyclo-N-methylphenylalanyltryptophenyl. The cytochrome P450 monooxygenase is responsible not only for pyrroloindole ring formation but also for concurrent dimerization of N-methylphenylalanyltryptophanyl diketopiperazine monomers into a homodimeric product. The chain is Nonribosomal peptide synthetase dtpA from Aspergillus flavus (strain ATCC 200026 / FGSC A1120 / IAM 13836 / NRRL 3357 / JCM 12722 / SRRC 167).